The chain runs to 393 residues: Sedoheptulose-1,7-bisphosphatase, chloroplastic (393 aa).

A disulfide bridge connects residues cysteine 115 and cysteine 120. The Mg(2+) site is built by aspartate 126, glutamate 155, aspartate 176, leucine 178, and aspartate 179. Residues 179-182, tyrosine 290, and lysine 320 contribute to the substrate site; that span reads DGSS. Glutamate 326 contacts Mg(2+).

This sequence belongs to the FBPase class 1 family. Homodimer. Mg(2+) is required as a cofactor.

It localises to the plastid. Its subcellular location is the chloroplast. The enzyme catalyses D-sedoheptulose 1,7-bisphosphate + H2O = D-sedoheptulose 7-phosphate + phosphate. It functions in the pathway carbohydrate biosynthesis; Calvin cycle. In Triticum aestivum (Wheat), this protein is Sedoheptulose-1,7-bisphosphatase, chloroplastic.